Here is a 519-residue protein sequence, read N- to C-terminus: MDAVLEPFPADRLFPGSSFLDLGDLNESDFLNNAHFPEHLDHFVENMEDFSNDLFSSFFDDPVLDEKSALLDMELDSPAPGIQAEHSYSLSGDSAPQSPLVPVKMEDTTQDVEHGAWALGNKLCSIMVKQEQSPELPVDPLAASSAMAAAAAMATPPLLGLSPMPRLPIPHQAPGEMTQLPVIKAEPPEMSQFLKVTPEDLVQMPPTPPSSHGSDSDGSQSPRSLPPSSPVRPMARSSTAISTSPLLTAPHKLQGTSGPLLLTEEEKRTLIAEGYPIPTKLPLTKAEEKALKRVRRKIKNKISAQESRRKKKEYVECLEKKVETYTSENNELWKKVETLETANRTLLQQLQKLQTLVTSKISRPYKMAATQTGTCLMVAALCFVLVLGSLVPCLPAFSSGSMTVKEDPIAADSVYAASQMPSRSLLFYDDGAGSWEDGRGALLPVEPPEGWELKPGGPAEQRPQDHLRHDRADSIHETTKYLRETWPEDTDDNGTSPNFSHPEWFHDRDLGPNTTIKLS.

The interval 1-60 (MDAVLEPFPADRLFPGSSFLDLGDLNESDFLNNAHFPEHLDHFVENMEDFSNDLFSSFFD) is required for transcription activation. At 1–376 (MDAVLEPFPA…MAATQTGTCL (376 aa)) the chain is on the cytoplasmic side. Lysine 184 participates in a covalent cross-link: Glycyl lysine isopeptide (Lys-Gly) (interchain with G-Cter in SUMO2). Residues 200 to 259 (DLVQMPPTPPSSHGSDSDGSQSPRSLPPSSPVRPMARSSTAISTSPLLTAPHKLQGTSGP) form a disordered region. Over residues 210–223 (SSHGSDSDGSQSPR) the composition is skewed to low complexity. The span at 236–246 (RSSTAISTSPL) shows a compositional bias: polar residues. The 64-residue stretch at 290-353 (ALKRVRRKIK…RTLLQQLQKL (64 aa)) folds into the bZIP domain. The interval 292–321 (KRVRRKIKNKISAQESRRKKKEYVECLEKK) is basic motif. Residues 332–353 (LWKKVETLETANRTLLQQLQKL) are leucine-zipper. The helical; Signal-anchor for type II membrane protein transmembrane segment at 377 to 397 (MVAALCFVLVLGSLVPCLPAF) threads the bilayer. Positions 392-395 (PCLP) match the S2P recognition motif. Over 398-519 (SSGSMTVKED…LGPNTTIKLS (122 aa)) the chain is Lumenal. Positions 423–426 (RSLL) match the S1P recognition motif. The interval 449 to 519 (EGWELKPGGP…LGPNTTIKLS (71 aa)) is disordered. The segment covering 462 to 486 (RPQDHLRHDRADSIHETTKYLRETW) has biased composition (basic and acidic residues). 3 N-linked (GlcNAc...) asparagine glycosylation sites follow: asparagine 493, asparagine 498, and asparagine 513.

This sequence belongs to the bZIP family. ATF subfamily. Interacts with SMAD4, the interaction takes place upon TGFB1 induction and SMAD4 acts as a CREB3L1 coactivator to induce the expression of genes involved in assembly of collagen extracellular matrix. Post-translationally, N-glycosylated. Ubiquitinated by HRD1/SYVN1; undergoes 'Lys-48'-linked ubiquitination, followed by rapid proteasomal degradation under normal conditions. Upon ER stress, SYVN1 E3 ubiquitin-protein ligase dissociates from its substrate, ubiquitination does not occur and CREB3L1 is stabilized. In terms of processing, upon ER stress or DNA damage, translocated to the Golgi apparatus, where it is processed by regulated intramembrane proteolysis (RIP) to release the cytosol-facing N-terminal transcription factor domain. The cleavage is performed sequentially by site-1 and site-2 proteases (S1P/MBTPS1 and S2P/MBTPS2). RIP is induced by TGFB1 and ceramide. Expressed in cortical and trabecular bones. Highly expressed in osteoblasts, but not detected in osteoclasts, nor in macrophages. Expressed at relatively low levels in lung and kidney. Weakly expressed in brain and spleen. Expressed in astrocytes.

It is found in the endoplasmic reticulum membrane. The protein localises to the nucleus. In terms of biological role, precursor of the transcription factor form (Processed cyclic AMP-responsive element-binding protein 3-like protein 1), which is embedded in the endoplasmic reticulum membrane with N-terminal DNA-binding and transcription activation domains oriented toward the cytosolic face of the membrane. In response to ER stress or DNA damage, transported to the Golgi, where it is cleaved in a site-specific manner by resident proteases S1P/MBTPS1 and S2P/MBTPS2. The released N-terminal cytosolic domain is translocated to the nucleus where it activates transcription of specific target genes involved in the cell-cycle progression inhibition. Its function is as follows. Transcription factor involved in cell type specific DNA damage and unfolded protein response (UPR). Binds the DNA consensus sequence 5'-GTGXGCXGC-3'. Plays a critical role in bone formation through the transcription of COL1A1, and possibly COL1A2, and the secretion of bone matrix proteins. Directly binds to the UPR element (UPRE)-like sequence in an osteoblast-specific COL1A1 promoter region and induces its transcription. Does not regulate COL1A1 in other tissues, such as skin. Required to protect astrocytes from ER stress-induced cell death. In astrocytes, binds to the cAMP response element (CRE) of the BiP/HSPA5 promoter and participate in its transcriptional activation. In astrocytes and osteoblasts, upon DNA damage, inhibits cell-cycle progression after G2/M phase by binding to promoters and activating transcription of genes encoding cell-cycle inhibitors, such as p21/CDKN1A. Required for TGFB1 to activate genes involved in the assembly of collagen extracellular matrix. The chain is Cyclic AMP-responsive element-binding protein 3-like protein 1 (Creb3l1) from Mus musculus (Mouse).